Reading from the N-terminus, the 354-residue chain is Nicotinate-nucleotide--dimethylbenzimidazole phosphoribosyltransferase (354 aa).

Catalysis depends on E319, which acts as the Proton acceptor.

The protein belongs to the CobT family.

It catalyses the reaction 5,6-dimethylbenzimidazole + nicotinate beta-D-ribonucleotide = alpha-ribazole 5'-phosphate + nicotinate + H(+). It functions in the pathway nucleoside biosynthesis; alpha-ribazole biosynthesis; alpha-ribazole from 5,6-dimethylbenzimidazole: step 1/2. Its function is as follows. Catalyzes the synthesis of alpha-ribazole-5'-phosphate from nicotinate mononucleotide (NAMN) and 5,6-dimethylbenzimidazole (DMB). The chain is Nicotinate-nucleotide--dimethylbenzimidazole phosphoribosyltransferase from Pelodictyon phaeoclathratiforme (strain DSM 5477 / BU-1).